A 114-amino-acid chain; its full sequence is Large ribosomal subunit protein uL18 (114 aa).

Belongs to the universal ribosomal protein uL18 family. As to quaternary structure, part of the 50S ribosomal subunit; part of the 5S rRNA/L5/L18/L25 subcomplex. Contacts the 5S and 23S rRNAs.

In terms of biological role, this is one of the proteins that bind and probably mediate the attachment of the 5S RNA into the large ribosomal subunit, where it forms part of the central protuberance. The chain is Large ribosomal subunit protein uL18 from Azobacteroides pseudotrichonymphae genomovar. CFP2.